A 241-amino-acid chain; its full sequence is Uridylate kinase (241 aa).

15 to 18 (KLSG) contributes to the ATP binding site. The segment at 23 to 28 (GTEGFG) is involved in allosteric activation by GTP. UMP is bound at residue glycine 57. 2 residues coordinate ATP: glycine 58 and arginine 62. UMP is bound by residues aspartate 77 and 138-145 (TGNPFFTT). Residues threonine 165, phenylalanine 171, and aspartate 174 each coordinate ATP.

This sequence belongs to the UMP kinase family. Homohexamer.

The protein localises to the cytoplasm. The enzyme catalyses UMP + ATP = UDP + ADP. Its pathway is pyrimidine metabolism; CTP biosynthesis via de novo pathway; UDP from UMP (UMPK route): step 1/1. Its activity is regulated as follows. Allosterically activated by GTP. Inhibited by UTP. In terms of biological role, catalyzes the reversible phosphorylation of UMP to UDP. This is Uridylate kinase from Salmonella choleraesuis (strain SC-B67).